Here is a 309-residue protein sequence, read N- to C-terminus: tRNA dimethylallyltransferase (309 aa).

An ATP-binding site is contributed by 14–21 (GPTASGKS). Substrate is bound at residue 16-21 (TASGKS). An interaction with substrate tRNA region spans residues 39 to 42 (DSMQ).

This sequence belongs to the IPP transferase family. As to quaternary structure, monomer. Mg(2+) is required as a cofactor.

The catalysed reaction is adenosine(37) in tRNA + dimethylallyl diphosphate = N(6)-dimethylallyladenosine(37) in tRNA + diphosphate. Its function is as follows. Catalyzes the transfer of a dimethylallyl group onto the adenine at position 37 in tRNAs that read codons beginning with uridine, leading to the formation of N6-(dimethylallyl)adenosine (i(6)A). In Geobacter metallireducens (strain ATCC 53774 / DSM 7210 / GS-15), this protein is tRNA dimethylallyltransferase.